A 279-amino-acid polypeptide reads, in one-letter code: Putative pyruvate, phosphate dikinase regulatory protein (279 aa).

Residue Gly-152 to Ser-159 coordinates ADP.

Belongs to the pyruvate, phosphate/water dikinase regulatory protein family. PDRP subfamily.

The catalysed reaction is N(tele)-phospho-L-histidyl/L-threonyl-[pyruvate, phosphate dikinase] + ADP = N(tele)-phospho-L-histidyl/O-phospho-L-threonyl-[pyruvate, phosphate dikinase] + AMP + H(+). It carries out the reaction N(tele)-phospho-L-histidyl/O-phospho-L-threonyl-[pyruvate, phosphate dikinase] + phosphate + H(+) = N(tele)-phospho-L-histidyl/L-threonyl-[pyruvate, phosphate dikinase] + diphosphate. Functionally, bifunctional serine/threonine kinase and phosphorylase involved in the regulation of the pyruvate, phosphate dikinase (PPDK) by catalyzing its phosphorylation/dephosphorylation. In Anaplasma marginale (strain Florida), this protein is Putative pyruvate, phosphate dikinase regulatory protein.